Consider the following 208-residue polypeptide: Pyridoxal 5'-phosphate synthase subunit PdxT (208 aa).

46 to 48 (GES) contacts L-glutamine. Cys78 acts as the Nucleophile in catalysis. L-glutamine is bound by residues Arg105 and 156–157 (IR). Active-site charge relay system residues include His192 and Glu194.

The protein belongs to the glutaminase PdxT/SNO family. As to quaternary structure, in the presence of PdxS, forms a dodecamer of heterodimers. Only shows activity in the heterodimer.

The catalysed reaction is aldehydo-D-ribose 5-phosphate + D-glyceraldehyde 3-phosphate + L-glutamine = pyridoxal 5'-phosphate + L-glutamate + phosphate + 3 H2O + H(+). It carries out the reaction L-glutamine + H2O = L-glutamate + NH4(+). It functions in the pathway cofactor biosynthesis; pyridoxal 5'-phosphate biosynthesis. Its function is as follows. Catalyzes the hydrolysis of glutamine to glutamate and ammonia as part of the biosynthesis of pyridoxal 5'-phosphate. The resulting ammonia molecule is channeled to the active site of PdxS. The protein is Pyridoxal 5'-phosphate synthase subunit PdxT of Bifidobacterium adolescentis (strain ATCC 15703 / DSM 20083 / NCTC 11814 / E194a).